The primary structure comprises 229 residues: Flavin-dependent thymidylate synthase (229 aa).

The ThyX domain maps to 1 to 217; the sequence is MEFKVLDKGF…PWTFESFLKF (217 aa). Residues Thr-55, 78–80, and Glu-86 contribute to the FAD site; that span reads RHR. Residues 75–78, 86–90, and Arg-156 contribute to the dUMP site; these read QWFR and EASLR. Residues 78–88 carry the ThyX motif motif; sequence RHRIGSFNEAS. FAD is bound by residues 172-174 and Asn-178; that span reads NAR. Residue Arg-183 coordinates dUMP. Arg-183 serves as the catalytic Involved in ionization of N3 of dUMP, leading to its activation.

The protein belongs to the thymidylate synthase ThyX family. As to quaternary structure, homotetramer. FAD serves as cofactor.

The enzyme catalyses dUMP + (6R)-5,10-methylene-5,6,7,8-tetrahydrofolate + NADPH + H(+) = dTMP + (6S)-5,6,7,8-tetrahydrofolate + NADP(+). It functions in the pathway pyrimidine metabolism; dTTP biosynthesis. In terms of biological role, catalyzes the reductive methylation of 2'-deoxyuridine-5'-monophosphate (dUMP) to 2'-deoxythymidine-5'-monophosphate (dTMP) while utilizing 5,10-methylenetetrahydrofolate (mTHF) as the methyl donor, and NADPH and FADH(2) as the reductant. The polypeptide is Flavin-dependent thymidylate synthase (Thermosipho melanesiensis (strain DSM 12029 / CIP 104789 / BI429)).